The primary structure comprises 147 residues: Ribonuclease 4 (147 aa).

An N-terminal signal peptide occupies residues 1-28 (MALQRTHSLLLLLLLTLLGLGLVQPSYG). Glutamine 29 bears the Pyrrolidone carboxylic acid mark. Residues arginine 35, histidine 40, lysine 68, asparagine 71, and threonine 72 each coordinate dUMP. Histidine 40 acts as the Proton acceptor in catalysis. 4 disulfides stabilise this stretch: cysteine 53/cysteine 109, cysteine 67/cysteine 120, cysteine 85/cysteine 135, and cysteine 92/cysteine 99. Histidine 144 functions as the Proton donor in the catalytic mechanism. Phenylalanine 145 lines the dUMP pocket.

This sequence belongs to the pancreatic ribonuclease family.

The protein localises to the secreted. Cleaves preferentially after uridine bases. Has antimicrobial activity against uropathogenic E.coli (UPEC). Probably contributes to urinary tract sterility. The protein is Ribonuclease 4 (RNASE4) of Pongo abelii (Sumatran orangutan).